Here is a 389-residue protein sequence, read N- to C-terminus: Succinate--CoA ligase [ADP-forming] subunit beta (389 aa).

ATP-binding positions include Lys-46, 53 to 55 (GRG), Glu-99, Cys-102, and Glu-107. Residues Asn-199 and Asp-213 each coordinate Mg(2+). Residues Asn-264 and 321-323 (GIV) contribute to the substrate site.

This sequence belongs to the succinate/malate CoA ligase beta subunit family. In terms of assembly, heterotetramer of two alpha and two beta subunits. Mg(2+) is required as a cofactor.

The enzyme catalyses succinate + ATP + CoA = succinyl-CoA + ADP + phosphate. It carries out the reaction GTP + succinate + CoA = succinyl-CoA + GDP + phosphate. It participates in carbohydrate metabolism; tricarboxylic acid cycle; succinate from succinyl-CoA (ligase route): step 1/1. In terms of biological role, succinyl-CoA synthetase functions in the citric acid cycle (TCA), coupling the hydrolysis of succinyl-CoA to the synthesis of either ATP or GTP and thus represents the only step of substrate-level phosphorylation in the TCA. The beta subunit provides nucleotide specificity of the enzyme and binds the substrate succinate, while the binding sites for coenzyme A and phosphate are found in the alpha subunit. The chain is Succinate--CoA ligase [ADP-forming] subunit beta from Haemophilus influenzae (strain 86-028NP).